A 994-amino-acid chain; its full sequence is Valine--tRNA ligase (994 aa).

A 'HIGH' region motif is present at residues 43 to 53; sequence PNVTGTLHMGH. The interval 332–356 is disordered; the sequence is IASGATSDTTDTPSDSDASNASNQH. The segment covering 333–353 has biased composition (low complexity); the sequence is ASGATSDTTDTPSDSDASNAS. The 'KMSKS' region signature appears at 585 to 589; that stretch reads KMSKS. Lysine 588 is a binding site for ATP. Residues 691–713 are disordered; that stretch reads TAHSPAQHQAGQDGQDVPRTPQP. Residues 928–994 are a coiled coil; it reads LIDVDAERAR…NGLRERRTTL (67 aa).

The protein belongs to the class-I aminoacyl-tRNA synthetase family. ValS type 1 subfamily. In terms of assembly, monomer.

The protein resides in the cytoplasm. The catalysed reaction is tRNA(Val) + L-valine + ATP = L-valyl-tRNA(Val) + AMP + diphosphate. Functionally, catalyzes the attachment of valine to tRNA(Val). As ValRS can inadvertently accommodate and process structurally similar amino acids such as threonine, to avoid such errors, it has a 'posttransfer' editing activity that hydrolyzes mischarged Thr-tRNA(Val) in a tRNA-dependent manner. This chain is Valine--tRNA ligase, found in Xylella fastidiosa (strain M23).